The chain runs to 72 residues: Tetrahydromethanopterin S-methyltransferase subunit G (72 aa).

A helical membrane pass occupies residues 48 to 68; that stretch reads IGILYGGFIGLLLFLIYTVVS.

Belongs to the MtrG family. As to quaternary structure, the complex is composed of 8 subunits; MtrA, MtrB, MtrC, MtrD, MtrE, MtrF, MtrG and MtrH.

It is found in the cell membrane. The enzyme catalyses 5-methyl-5,6,7,8-tetrahydromethanopterin + coenzyme M + 2 Na(+)(in) = 5,6,7,8-tetrahydromethanopterin + methyl-coenzyme M + 2 Na(+)(out). It functions in the pathway one-carbon metabolism; methanogenesis from CO(2); methyl-coenzyme M from 5,10-methylene-5,6,7,8-tetrahydromethanopterin: step 2/2. In terms of biological role, part of a complex that catalyzes the formation of methyl-coenzyme M and tetrahydromethanopterin from coenzyme M and methyl-tetrahydromethanopterin. This is an energy-conserving, sodium-ion translocating step. The polypeptide is Tetrahydromethanopterin S-methyltransferase subunit G (Methanosarcina barkeri (strain Fusaro / DSM 804)).